Here is an 85-residue protein sequence, read N- to C-terminus: Protein U62 (85 aa).

Belongs to the herpesviridae UL91 family.

The chain is Protein U62 (U62) from Homo sapiens (Human).